Here is a 353-residue protein sequence, read N- to C-terminus: Phospho-N-acetylmuramoyl-pentapeptide-transferase (353 aa).

10 helical membrane-spanning segments follow: residues 24–44 (LGFF…ILWA), 66–86 (TPTM…LLCA), 88–108 (LGNP…FVGF), 129–149 (FGML…KGLD), 160–180 (PLFE…FLSA), 192–212 (GLAS…VYVA), 229–249 (VGEL…FLWY), 256–276 (VFMG…NAIV), 281–301 (ILLV…ILQV), and 330–350 (KVIV…LLSL).

This sequence belongs to the glycosyltransferase 4 family. MraY subfamily. Mg(2+) is required as a cofactor.

Its subcellular location is the cell inner membrane. It carries out the reaction UDP-N-acetyl-alpha-D-muramoyl-L-alanyl-gamma-D-glutamyl-meso-2,6-diaminopimeloyl-D-alanyl-D-alanine + di-trans,octa-cis-undecaprenyl phosphate = di-trans,octa-cis-undecaprenyl diphospho-N-acetyl-alpha-D-muramoyl-L-alanyl-D-glutamyl-meso-2,6-diaminopimeloyl-D-alanyl-D-alanine + UMP. It participates in cell wall biogenesis; peptidoglycan biosynthesis. Functionally, catalyzes the initial step of the lipid cycle reactions in the biosynthesis of the cell wall peptidoglycan: transfers peptidoglycan precursor phospho-MurNAc-pentapeptide from UDP-MurNAc-pentapeptide onto the lipid carrier undecaprenyl phosphate, yielding undecaprenyl-pyrophosphoryl-MurNAc-pentapeptide, known as lipid I. This Helicobacter acinonychis (strain Sheeba) protein is Phospho-N-acetylmuramoyl-pentapeptide-transferase.